A 309-amino-acid chain; its full sequence is Aspartate carbamoyltransferase catalytic subunit (309 aa).

The carbamoyl phosphate site is built by R55 and T56. K85 lines the L-aspartate pocket. Carbamoyl phosphate contacts are provided by R106, H135, and Q138. L-aspartate is bound by residues R168 and R230. Carbamoyl phosphate-binding residues include L268 and P269.

This sequence belongs to the aspartate/ornithine carbamoyltransferase superfamily. ATCase family. As to quaternary structure, heterododecamer (2C3:3R2) of six catalytic PyrB chains organized as two trimers (C3), and six regulatory PyrI chains organized as three dimers (R2).

The enzyme catalyses carbamoyl phosphate + L-aspartate = N-carbamoyl-L-aspartate + phosphate + H(+). It participates in pyrimidine metabolism; UMP biosynthesis via de novo pathway; (S)-dihydroorotate from bicarbonate: step 2/3. Functionally, catalyzes the condensation of carbamoyl phosphate and aspartate to form carbamoyl aspartate and inorganic phosphate, the committed step in the de novo pyrimidine nucleotide biosynthesis pathway. The polypeptide is Aspartate carbamoyltransferase catalytic subunit (Aliivibrio fischeri (strain ATCC 700601 / ES114) (Vibrio fischeri)).